The primary structure comprises 332 residues: Cysteine and histidine-rich domain-containing protein 1 (332 aa).

Ala-2 bears the N-acetylalanine mark. Residues 2 to 77 are interaction with PPP5C; sequence ALLCYNRACG…KPPEPVKPEV (76 aa). Zn(2+) contacts are provided by Cys-5, Cys-10, Cys-24, His-27, Cys-42, and Cys-43. CHORD domains lie at 5–64 and 157–216; these read CYNR…KGRH and CKNG…KGRH. At Thr-47 the chain carries Phosphothreonine. Phosphoserine is present on Ser-51. 10 residues coordinate Zn(2+): Cys-59, His-64, Cys-157, Cys-162, Cys-176, His-179, Cys-194, Cys-195, Cys-211, and His-216. The segment at 62–82 is disordered; it reads GRHNSEKPPEPVKPEVKTTEK. Residues 64–82 are compositionally biased toward basic and acidic residues; it reads HNSEKPPEPVKPEVKTTEK. The tract at residues 65–316 is interaction with HSP90AA1 and HSP90AB1; it reads NSEKPPEPVK…AEPMQWASLE (252 aa). A CS domain is found at 227–316; sequence VVPCRHDWHQ…AEPMQWASLE (90 aa).

Interacts with HSP90AA1, HSP90AB1, PPP5C, ROCK1 and ROCK2.

In terms of biological role, regulates centrosome duplication, probably by inhibiting the kinase activity of ROCK2. Proposed to act as co-chaperone for HSP90. May play a role in the regulation of NOD1 via a HSP90 chaperone complex. In vitro, has intrinsic chaperone activity. This function may be achieved by inhibiting association of ROCK2 with NPM1. Plays a role in ensuring the localization of the tyrosine kinase receptor EGFR to the plasma membrane, and thus ensures the subsequent regulation of EGFR activity and EGF-induced actin cytoskeleton remodeling. Involved in stress response. Prevents tumorigenesis. The chain is Cysteine and histidine-rich domain-containing protein 1 (CHORDC1) from Macaca fascicularis (Crab-eating macaque).